The primary structure comprises 124 residues: Putative melanoma-associated antigen 5P (124 aa).

The span at 1–14 (MSLEQKSQHCKPEE) shows a compositional bias: basic and acidic residues. Disordered regions lie at residues 1-69 (MSLE…QGAS) and 82-103 (QSIK…DPES). The 122-residue stretch at 3–124 (LEQKSQHCKP…DLIHFLLLKY (122 aa)) folds into the MAGE domain. 2 stretches are compositionally biased toward polar residues: residues 30–44 (AATT…SSSP) and 82–100 (QSIK…TSPD).

As to expression, expressed in many tumors of several types, such as melanoma, head and neck squamous cell carcinoma, lung carcinoma and breast carcinoma, but not in normal tissues except for testes.

Functionally, may negatively regulates apoptosis. This Homo sapiens (Human) protein is Putative melanoma-associated antigen 5P.